Reading from the N-terminus, the 461-residue chain is MDEMPEPPAMTVHLLANAGQGLLLQQTLDQLLDCICPDIRLFLVSERASPVKYYDKCHSKRSRFPGMSVLLFLKENLGEERLFHVLDSLQHWPWQCYPTQNAQGRPCPYILANQEFYSLDSQMPIWGVRQVHCGTEILRVTLYCSFDNYEDAIRLYAMILQREATLQKSNFCFFVLYSTETFALQLSLKQLPLGTSVDPKEASVLQFKVQEIGQLVPLLPHPCVPISRTRWQTQDYDGNKILLQVQLNPGLGVRNGEPPFLNGTLGADTLPHGSRLTPVSAIRTLELRSRRIRGRRFKVSSVELPEPGGRPVSDGSSNTWWKSAGGSAQPSSPATESQPQLSSLHLEPGARMKVLGRENSFEKLEAETNVDTGFTMVSSEPRPSFASRFPRNLQTHQPPSCLSTSFSGSAASKNNRIFKERVHPLPLAGQRDLGAKKILSKCPLPLPVQGEAKEAEEEFFI.

Serine 49 bears the Phosphoserine mark. The disordered stretch occupies residues 302–346 (VELPEPGGRPVSDGSSNTWWKSAGGSAQPSSPATESQPQLSSLHL). Residues 323-334 (SAGGSAQPSSPA) are compositionally biased toward low complexity.

The protein belongs to the FAM124 family. In terms of assembly, interacts with CHD7 and CHD8.

The protein localises to the nucleus. In Bos taurus (Bovine), this protein is Protein FAM124B (FAM124B).